Here is a 255-residue protein sequence, read N- to C-terminus: UDP-2,3-diacylglucosamine hydrolase (255 aa).

Mn(2+) is bound by residues Asp-8, His-10, Asp-41, Asn-79, and His-114. Substrate is bound at residue 79–80; that stretch reads NR. Substrate contacts are provided by Asp-122, Ser-160, Asn-164, Lys-167, and His-195. The Mn(2+) site is built by His-195 and His-197.

This sequence belongs to the LpxH family. Requires Mn(2+) as cofactor.

The protein localises to the cell inner membrane. The catalysed reaction is UDP-2-N,3-O-bis[(3R)-3-hydroxytetradecanoyl]-alpha-D-glucosamine + H2O = 2-N,3-O-bis[(3R)-3-hydroxytetradecanoyl]-alpha-D-glucosaminyl 1-phosphate + UMP + 2 H(+). It participates in glycolipid biosynthesis; lipid IV(A) biosynthesis; lipid IV(A) from (3R)-3-hydroxytetradecanoyl-[acyl-carrier-protein] and UDP-N-acetyl-alpha-D-glucosamine: step 4/6. In terms of biological role, hydrolyzes the pyrophosphate bond of UDP-2,3-diacylglucosamine to yield 2,3-diacylglucosamine 1-phosphate (lipid X) and UMP by catalyzing the attack of water at the alpha-P atom. Involved in the biosynthesis of lipid A, a phosphorylated glycolipid that anchors the lipopolysaccharide to the outer membrane of the cell. In Hamiltonella defensa subsp. Acyrthosiphon pisum (strain 5AT), this protein is UDP-2,3-diacylglucosamine hydrolase.